A 525-amino-acid polypeptide reads, in one-letter code: GMP synthase [glutamine-hydrolyzing] (525 aa).

The region spanning 8–207 is the Glutamine amidotransferase type-1 domain; sequence KILILDFGSQ…ALDICGCDAN (200 aa). Cysteine 85 serves as the catalytic Nucleophile. Active-site residues include histidine 181 and glutamate 183. The 193-residue stretch at 208 to 400 folds into the GMPS ATP-PPase domain; sequence WKPSSIIEDA…LGLPYDMLYR (193 aa). 235–241 provides a ligand contact to ATP; it reads SGGVDSS.

As to quaternary structure, homodimer.

It carries out the reaction XMP + L-glutamine + ATP + H2O = GMP + L-glutamate + AMP + diphosphate + 2 H(+). It functions in the pathway purine metabolism; GMP biosynthesis; GMP from XMP (L-Gln route): step 1/1. Its function is as follows. Catalyzes the synthesis of GMP from XMP. The sequence is that of GMP synthase [glutamine-hydrolyzing] from Shewanella piezotolerans (strain WP3 / JCM 13877).